The chain runs to 98 residues: uncharacterized protein (98 aa).

Positions arginine 19–lysine 31 are enriched in basic residues. Residues arginine 19–serine 47 form a disordered region.

It belongs to the lymphocryptovirus BNLF2b family.

This is an uncharacterized protein from Homo sapiens (Human).